The primary structure comprises 1465 residues: Protein clueless (1465 aa).

A disordered region spans residues 1–87 (MALEIDAKNA…SNGHSENGDA (87 aa)). Residues 30-51 (HNNNNNAPAAGEKNLVNGSSAA) are compositionally biased toward low complexity. Residues 52-61 (TKKKGKKNRN) are compositionally biased toward basic residues. A Phosphoserine modification is found at Ser273. The Clu domain occupies 427–669 (RAEDAFSSKL…RTFPPDVNFL (243 aa)). Basic and acidic residues predominate over residues 742–767 (AEKQEEPNEEQPEKTEEQPAEKEESK). 2 disordered regions span residues 742 to 776 (AEKQ…TKSA) and 962 to 1021 (VSSD…SNSD). A compositionally biased stretch (basic residues) spans 970–986 (KQPRNNSGKHNKHKAAK). 2 stretches are compositionally biased toward low complexity: residues 987–1003 (ASKP…ATAA) and 1010–1020 (ATTSGATSSNS). 3 TPR repeats span residues 1114-1147 (AYNF…LNNV), 1240-1273 (ALID…NLKY), and 1275-1308 (GNKA…EKET). Positions 1428 to 1465 (NNNDNASETEQPKDEASAAGTPTQLTNGSEESTATVSS) are disordered. The segment covering 1447–1465 (GTPTQLTNGSEESTATVSS) has biased composition (polar residues).

This sequence belongs to the CLU family.

It is found in the cytoplasm. In terms of biological role, mRNA-binding protein involved in proper cytoplasmic distribution of mitochondria. This chain is Protein clueless, found in Drosophila virilis (Fruit fly).